A 267-amino-acid chain; its full sequence is Probable tetrahydroxynaphthalene reductase MYCGRDRAFT_87994 (267 aa).

4 residues coordinate NADP(+): isoleucine 26, aspartate 72, asparagine 99, and arginine 132. Catalysis depends on serine 149, which acts as the Proton donor. 4 residues coordinate NADP(+): tyrosine 163, lysine 167, isoleucine 196, and threonine 198. Residue tyrosine 163 is the Proton acceptor of the active site. Lysine 167 serves as the catalytic Lowers pKa of active site Tyr.

The protein belongs to the short-chain dehydrogenases/reductases (SDR) family. In terms of assembly, homotetramer.

The catalysed reaction is scytalone + NADP(+) = naphthalene-1,3,6,8-tetrol + NADPH + H(+). It functions in the pathway pigment biosynthesis; melanin biosynthesis. In terms of biological role, probable tetrahydroxynaphthalene reductase; part of the gene cluster 29 that mediates the biosynthesis dihydroxynaphthalene (DHN)-melanin, a bluish-green pigment and a structural component of the conidial wall. Catalyzes the NADPH-dependent reduction of 1,3,6,8-tetrahydroxynaphthalene (T4HN) into (+)-scytalone. In Zymoseptoria tritici (strain CBS 115943 / IPO323) (Speckled leaf blotch fungus), this protein is Probable tetrahydroxynaphthalene reductase MYCGRDRAFT_87994.